A 297-amino-acid polypeptide reads, in one-letter code: UDP-N-acetylenolpyruvoylglucosamine reductase (297 aa).

In terms of domain architecture, FAD-binding PCMH-type spans 27–191 (TGGNADIFVM…LDATFSLELE (165 aa)). R170 is a catalytic residue. S220 functions as the Proton donor in the catalytic mechanism. E290 is a catalytic residue.

Belongs to the MurB family. It depends on FAD as a cofactor.

Its subcellular location is the cytoplasm. It catalyses the reaction UDP-N-acetyl-alpha-D-muramate + NADP(+) = UDP-N-acetyl-3-O-(1-carboxyvinyl)-alpha-D-glucosamine + NADPH + H(+). It participates in cell wall biogenesis; peptidoglycan biosynthesis. Functionally, cell wall formation. This chain is UDP-N-acetylenolpyruvoylglucosamine reductase, found in Listeria welshimeri serovar 6b (strain ATCC 35897 / DSM 20650 / CCUG 15529 / CIP 8149 / NCTC 11857 / SLCC 5334 / V8).